We begin with the raw amino-acid sequence, 100 residues long: Large ribosomal subunit protein eL14 (100 aa).

Belongs to the eukaryotic ribosomal protein eL14 family.

This Aeropyrum pernix (strain ATCC 700893 / DSM 11879 / JCM 9820 / NBRC 100138 / K1) protein is Large ribosomal subunit protein eL14.